The following is a 100-amino-acid chain: Large ribosomal subunit protein uL23 (100 aa).

It belongs to the universal ribosomal protein uL23 family. In terms of assembly, part of the 50S ribosomal subunit. Contacts protein L29, and trigger factor when it is bound to the ribosome.

Its function is as follows. One of the early assembly proteins it binds 23S rRNA. One of the proteins that surrounds the polypeptide exit tunnel on the outside of the ribosome. Forms the main docking site for trigger factor binding to the ribosome. This Kosmotoga olearia (strain ATCC BAA-1733 / DSM 21960 / TBF 19.5.1) protein is Large ribosomal subunit protein uL23.